Here is a 195-residue protein sequence, read N- to C-terminus: Dehydrin DHN1 (195 aa).

Positions 1-195 are disordered; that stretch reads MAEYGDQYGR…IKEKLPGGHH (195 aa). A compositionally biased stretch (low complexity) spans 37-48; the sequence is YGTTGTTVGYGT. A compositionally biased stretch (polar residues) spans 50–64; the sequence is QCVTTVTTGAQKTDQ. Positions 65–88 are enriched in low complexity; sequence YGTPGTTGAYGTDQYGTTGTTGEY. Basic and acidic residues-rich tracts occupy residues 136–153 and 173–195; these read KEKI…DDQT and SPEH…GGHH.

The protein belongs to the plant dehydrin family. Post-translationally, phosphorylated in vitro by CK2. In terms of tissue distribution, expressed in roots and leaves.

It is found in the cytoplasm. The protein resides in the nucleus. This is Dehydrin DHN1 from Avicennia marina (Grey mangrove).